A 260-amino-acid polypeptide reads, in one-letter code: Snake venom serine proteinase 12 (260 aa).

The N-terminal stretch at 1 to 18 (MVLIRVLANLLILQLSYA) is a signal peptide. Positions 19 to 24 (QKSSEL) are excised as a propeptide. Residues 25–251 (VIGGDECNIN…HLDWIQSIIA (227 aa)) enclose the Peptidase S1 domain. 6 disulfide bridges follow: cysteine 31–cysteine 163, cysteine 50–cysteine 66, cysteine 98–cysteine 258, cysteine 142–cysteine 212, cysteine 174–cysteine 191, and cysteine 202–cysteine 227. The Charge relay system role is filled by histidine 65. Asparagine 103 is a glycosylation site (N-linked (GlcNAc...) asparagine). The Charge relay system role is filled by aspartate 110. The Charge relay system role is filled by serine 206.

It belongs to the peptidase S1 family. Snake venom subfamily. As to quaternary structure, monomer. As to expression, expressed by the venom gland.

Its subcellular location is the secreted. Its function is as follows. Snake venom serine protease that may act in the hemostasis system of the prey. The protein is Snake venom serine proteinase 12 of Crotalus adamanteus (Eastern diamondback rattlesnake).